Here is a 338-residue protein sequence, read N- to C-terminus: Transcription factor MYB76 (338 aa).

2 consecutive HTH myb-type domains span residues 9 to 65 (GEGL…KPDI) and 66 to 116 (KRGE…KKRL). 2 consecutive DNA-binding regions (H-T-H motif) follow at residues 37–61 (WRDIPEKAGLKRCGKSCRLRWTNYL) and 89–112 (WSVIARHLPKRTDNEVKNYWNTHL). Disordered regions lie at residues 123–171 (PVTH…SSNL) and 176–195 (SKISSGETQIESGHVSCKKR). The span at 140 to 154 (MKFDFQKKSNQDEHS) shows a compositional bias: basic and acidic residues. The segment covering 155-171 (SQSSSTTPASLPLSSNL) has biased composition (low complexity).

Can form complexes with MYC2, MYC3 or MYC4. Expressed in both vegetative and generative organs. Mostly present in inflorescences, flowers and seedlings, in the transition zone between roots and the foliar part, and stems, and, to a lower extent, in leaves (in midvein and trichomes).

The protein localises to the nucleus. In terms of biological role, plays a role in determining the spatial distribution of aliphatic glucosinolates (AGLSs) within the leaf, mostly short chained. Together with MYB28/HAG1 and MYB29/HAG3, promotes aliphatic glucosinolate biosynthesis and represses indolic glucosinolate biosynthesis, but could not activate AGSL biosynthesis on its own. The polypeptide is Transcription factor MYB76 (MYB76) (Arabidopsis thaliana (Mouse-ear cress)).